Reading from the N-terminus, the 527-residue chain is NAD(P)H-quinone oxidoreductase chain 4 1 (527 aa).

13 consecutive transmembrane segments (helical) span residues 6-26 (FPWL…VPII), 36-56 (WFAL…FYSS), 91-111 (LIIL…PVTF), 113-133 (PKLF…VFAV), 136-156 (LLLF…ILSI), 169-189 (FILY…TMAF), 212-232 (LFLY…FPLH), 243-263 (TAPA…YALL), 275-295 (AVFA…AALT), 306-326 (IAYS…SFTD), 331-351 (GAML…FMVG), 387-407 (LALP…GFAT), and 417-437 (VIIV…LLSM).

It belongs to the complex I subunit 4 family.

Its subcellular location is the cellular thylakoid membrane. It carries out the reaction a plastoquinone + NADH + (n+1) H(+)(in) = a plastoquinol + NAD(+) + n H(+)(out). The enzyme catalyses a plastoquinone + NADPH + (n+1) H(+)(in) = a plastoquinol + NADP(+) + n H(+)(out). Its function is as follows. NDH-1 shuttles electrons from NAD(P)H, via FMN and iron-sulfur (Fe-S) centers, to quinones in the respiratory chain. The immediate electron acceptor for the enzyme in this species is believed to be plastoquinone. Couples the redox reaction to proton translocation (for every two electrons transferred, four hydrogen ions are translocated across the cytoplasmic membrane), and thus conserves the redox energy in a proton gradient. The protein is NAD(P)H-quinone oxidoreductase chain 4 1 of Microcystis aeruginosa (strain NIES-843 / IAM M-2473).